Reading from the N-terminus, the 1112-residue chain is Carbamoyl phosphate synthase large chain (1112 aa).

The carboxyphosphate synthetic domain stretch occupies residues 1–407 (MPRRTDLRHV…ALGKVMRSLE (407 aa)). The ATP site is built by Arg134, Arg174, Gly180, Gly181, Glu213, Ile215, Glu220, Gly246, Val247, His248, Gln290, and Glu304. Residues 138 to 333 (KDIVTKVGGE…IAKIAAKLAI (196 aa)) enclose the ATP-grasp 1 domain. The Mg(2+) site is built by Gln290, Glu304, and Asn306. Positions 290, 304, and 306 each coordinate Mn(2+). The oligomerization domain stretch occupies residues 408-559 (TGRAGFWTAP…ELDPAAESEV (152 aa)). The interval 560 to 965 (APQAERPKVL…AFAKSQTAAY (406 aa)) is carbamoyl phosphate synthetic domain. Residues 693–884 (GEVLRTAGLP…LAKACARIML (192 aa)) enclose the ATP-grasp 2 domain. Residues Arg729, Arg768, Leu770, Glu775, Gly800, Ile801, His802, Ser803, Gln843, and Glu855 each contribute to the ATP site. Gln843, Glu855, and Asn857 together coordinate Mg(2+). The Mn(2+) site is built by Gln843, Glu855, and Asn857. The MGS-like domain occupies 966–1112 (GSLPSEGTVF…LQELHSELGN (147 aa)). Residues 966-1112 (GSLPSEGTVF…LQELHSELGN (147 aa)) are allosteric domain.

The protein belongs to the CarB family. In terms of assembly, composed of two chains; the small (or glutamine) chain promotes the hydrolysis of glutamine to ammonia, which is used by the large (or ammonia) chain to synthesize carbamoyl phosphate. Tetramer of heterodimers (alpha,beta)4. Mg(2+) serves as cofactor. Requires Mn(2+) as cofactor.

It carries out the reaction hydrogencarbonate + L-glutamine + 2 ATP + H2O = carbamoyl phosphate + L-glutamate + 2 ADP + phosphate + 2 H(+). The enzyme catalyses hydrogencarbonate + NH4(+) + 2 ATP = carbamoyl phosphate + 2 ADP + phosphate + 2 H(+). It participates in amino-acid biosynthesis; L-arginine biosynthesis; carbamoyl phosphate from bicarbonate: step 1/1. The protein operates within pyrimidine metabolism; UMP biosynthesis via de novo pathway; (S)-dihydroorotate from bicarbonate: step 1/3. Large subunit of the glutamine-dependent carbamoyl phosphate synthetase (CPSase). CPSase catalyzes the formation of carbamoyl phosphate from the ammonia moiety of glutamine, carbonate, and phosphate donated by ATP, constituting the first step of 2 biosynthetic pathways, one leading to arginine and/or urea and the other to pyrimidine nucleotides. The large subunit (synthetase) binds the substrates ammonia (free or transferred from glutamine from the small subunit), hydrogencarbonate and ATP and carries out an ATP-coupled ligase reaction, activating hydrogencarbonate by forming carboxy phosphate which reacts with ammonia to form carbamoyl phosphate. This Mycobacterium sp. (strain JLS) protein is Carbamoyl phosphate synthase large chain.